Reading from the N-terminus, the 940-residue chain is Valine--tRNA ligase (940 aa).

Positions 47–57 match the 'HIGH' region motif; that stretch reads PNVTGVLHMGH. A 'KMSKS' region motif is present at residues 564–568; it reads KLSKS. K567 contacts ATP. Positions 873–905 form a coiled coil; sequence EEHLLKEKGRLEKERVRLERAVENLERLLGDES.

This sequence belongs to the class-I aminoacyl-tRNA synthetase family. ValS type 1 subfamily. In terms of assembly, monomer.

It is found in the cytoplasm. The catalysed reaction is tRNA(Val) + L-valine + ATP = L-valyl-tRNA(Val) + AMP + diphosphate. In terms of biological role, catalyzes the attachment of valine to tRNA(Val). As ValRS can inadvertently accommodate and process structurally similar amino acids such as threonine, to avoid such errors, it has a 'posttransfer' editing activity that hydrolyzes mischarged Thr-tRNA(Val) in a tRNA-dependent manner. The sequence is that of Valine--tRNA ligase from Chlamydia pneumoniae (Chlamydophila pneumoniae).